We begin with the raw amino-acid sequence, 244 residues long: 5-oxoprolinase subunit A (244 aa).

The protein belongs to the LamB/PxpA family. Forms a complex composed of PxpA, PxpB and PxpC.

It catalyses the reaction 5-oxo-L-proline + ATP + 2 H2O = L-glutamate + ADP + phosphate + H(+). Functionally, catalyzes the cleavage of 5-oxoproline to form L-glutamate coupled to the hydrolysis of ATP to ADP and inorganic phosphate. The chain is 5-oxoprolinase subunit A from Escherichia coli O6:K15:H31 (strain 536 / UPEC).